Here is a 338-residue protein sequence, read N- to C-terminus: O-methyltransferase 4 (338 aa).

S-adenosyl-L-methionine-binding residues include glycine 184, aspartate 207, asparagine 230, phenylalanine 231, lysine 244, and arginine 245. Histidine 248 functions as the Proton acceptor in the catalytic mechanism.

Belongs to the class I-like SAM-binding methyltransferase superfamily. Cation-independent O-methyltransferase family. COMT subfamily.

It carries out the reaction (3,5-dichloro-2,4,6-trihydroxyphenyl)hexan-1-one + S-adenosyl-L-methionine = 1-(3,5-dichloro-2,6-dihydroxy-4-methoxyphenyl)hexan-1-one + S-adenosyl-L-homocysteine + H(+). This chain is O-methyltransferase 4 (omt4), found in Dictyostelium discoideum (Social amoeba).